Reading from the N-terminus, the 68-residue chain is Beta-defensin 1 (68 aa).

Positions 1 to 21 are cleaved as a signal peptide; it reads MRTSYLLLFTLCLLLSEMASG. Positions 22–32 are excised as a propeptide; it reads DNFLTGLGHRS. 3 disulfides stabilise this stretch: Cys37-Cys66, Cys44-Cys59, and Cys49-Cys67.

Belongs to the beta-defensin family. As to quaternary structure, monomer. Homodimer.

The protein resides in the secreted. It localises to the membrane. In terms of biological role, has bactericidal activity. May act as a ligand for C-C chemokine receptor CCR6. Positively regulates the sperm motility and bactericidal activity in a CCR6-dependent manner. Binds to CCR6 and triggers Ca2+ mobilization in the sperm which is important for its motility. This is Beta-defensin 1 (DEFB1) from Macaca mulatta (Rhesus macaque).